A 497-amino-acid polypeptide reads, in one-letter code: Putative diacyglycerol O-acyltransferase Rv3480c (497 aa).

His143 (proton acceptor) is an active-site residue.

It belongs to the long-chain O-acyltransferase family.

It carries out the reaction an acyl-CoA + a 1,2-diacyl-sn-glycerol = a triacyl-sn-glycerol + CoA. The enzyme catalyses di-(9Z)-octadecenoylglycerol + (9Z)-octadecenoyl-CoA = 1,2,3-tri-(9Z-octadecenoyl)-glycerol + CoA. The catalysed reaction is hexadecan-1-ol + hexadecanoyl-CoA = hexadecanyl hexadecanoate + CoA. The protein operates within glycerolipid metabolism; triacylglycerol biosynthesis. Upon expression in E.coli has a weak triacylglycerol synthase function, making triacylglycerol (TG) from diolein and long-chain fatty acyl-CoA. Also functions weakly as a wax synthase, as it incorporates palmityl alcohol into wax esters in the presence of palmitoyl-CoA. The polypeptide is Putative diacyglycerol O-acyltransferase Rv3480c (Mycobacterium tuberculosis (strain ATCC 25618 / H37Rv)).